A 368-amino-acid chain; its full sequence is Peptidoglycan-recognition protein LA (368 aa).

At 1–127 the chain is on the cytoplasmic side; it reads MFEENNSPTT…KSPSRRVTRN (127 aa). 2 disordered regions span residues 21–46 and 101–122; these read QRAS…GLPL and INSN…SPSR. 2 stretches are compositionally biased toward low complexity: residues 33 to 43 and 102 to 113; these read TSAGSSTSSSG and NSNNANGNGNAN. The chain crosses the membrane as a helical span at residues 128–148; sequence TILLITLILLVLATGLIVLYV. Residues 149 to 368 are Extracellular-facing; that stretch reads ELNRPKPELP…MKTESWDAKQ (220 aa). A disulfide bridge links Cys221 with Cys227. Residues 233–320 enclose the N-acetylmuramoyl-L-alanine amidase domain; sequence TIQDSAIAEK…DVDYKLVAQN (88 aa). N-linked (GlcNAc...) asparagine glycans are attached at residues Asn273 and Asn320.

It belongs to the N-acetylmuramoyl-L-alanine amidase 2 family. As to expression, expressed in uninduced hemocytes and mbn-2 cells.

It is found in the cell membrane. Functionally, peptidoglycan-recognition protein probably involved in innate immunity by binding to peptidoglycans (PGN) of bacteria and activating the immune response. This Drosophila melanogaster (Fruit fly) protein is Peptidoglycan-recognition protein LA (PGRP-LA).